The primary structure comprises 134 residues: MIIGIGSDLCDIRRVERTLERFGERFIQRVFTETERRRAARRPAQFAATLAKRFAAKEACAKALGTGFRRGVFMSDLGVVNLPSGQPTLALTGGAAERLAALTPPGRSAFVHLSLTDEYPYAYAHVIIEARDGA.

2 residues coordinate Mg(2+): Asp-8 and Glu-58.

The protein belongs to the P-Pant transferase superfamily. AcpS family. The cofactor is Mg(2+).

The protein localises to the cytoplasm. It carries out the reaction apo-[ACP] + CoA = holo-[ACP] + adenosine 3',5'-bisphosphate + H(+). Its function is as follows. Transfers the 4'-phosphopantetheine moiety from coenzyme A to a Ser of acyl-carrier-protein. The polypeptide is Holo-[acyl-carrier-protein] synthase (Acidiphilium cryptum (strain JF-5)).